The primary structure comprises 426 residues: 3-phosphoshikimate 1-carboxyvinyltransferase (426 aa).

The 3-phosphoshikimate site is built by K22, S23, and R27. Residue K22 participates in phosphoenolpyruvate binding. Positions 96 and 124 each coordinate phosphoenolpyruvate. The 3-phosphoshikimate site is built by S170, S171, Q172, S198, D314, N337, and K341. Q172 contacts phosphoenolpyruvate. D314 functions as the Proton acceptor in the catalytic mechanism. 3 residues coordinate phosphoenolpyruvate: R345, R387, and K412.

It belongs to the EPSP synthase family. As to quaternary structure, monomer.

It localises to the cytoplasm. The catalysed reaction is 3-phosphoshikimate + phosphoenolpyruvate = 5-O-(1-carboxyvinyl)-3-phosphoshikimate + phosphate. Its pathway is metabolic intermediate biosynthesis; chorismate biosynthesis; chorismate from D-erythrose 4-phosphate and phosphoenolpyruvate: step 6/7. Catalyzes the transfer of the enolpyruvyl moiety of phosphoenolpyruvate (PEP) to the 5-hydroxyl of shikimate-3-phosphate (S3P) to produce enolpyruvyl shikimate-3-phosphate and inorganic phosphate. This is 3-phosphoshikimate 1-carboxyvinyltransferase from Aliivibrio fischeri (strain MJ11) (Vibrio fischeri).